The following is a 438-amino-acid chain: MTLTDLETCAEEIATAARTLARDGHSGGYSAGLPDHLRAVQRTLIANASQVLALASQPADLVRQLALYNQLLACLRWLGEFQVLACIPLDESVPFEDVADIAGVPECRLRRLVRPLFTIGFLCEPSPGHVAHSVLSKQFVTQPALLDAILFMSETLAPSASAMGTQTRRFGASEQAGDSAWNMAVGSDSPFAACLQQRPKVKRQLGAYLSYVSSAIDAGVEDTLTRMNWQNLGMATVVHVGAQSPSLVVALAPQFPSLRFLVQTEAKAESGGHQPCLDNHGIPALKLASIPLHLRARITWGTRLSTATQPVLDAAVYLISIPFPSPQSPAMEITMRVAQALKAHVEVLRNNSDARLILTLPMSSATRSMDAAARAAVSLSDLSLLQLTNGGSLNMGEIRDLLRSRSDGLVVMREVRSPTNAVIAFEIQYRVDNDDNRY.

The HTH iclR-type domain maps to 65-134 (LALYNQLLAC…PSPGHVAHSV (70 aa)). Residues 95-114 (FEDVADIAGVPECRLRRLVR) constitute a DNA-binding region (H-T-H motif).

As to quaternary structure, interacts with aflR.

It localises to the nucleus. It is found in the endosome. Its function is as follows. Transcription coactivator involved in regulation of the aflatoxin biosynthesis gene cluster with aflR. The ratio of the expression data between aflS:aflR plays a crucial role in the regulation of aflatoxins production. A high ratio, produced at a range between 17 and 30 degrees Celsius, corresponds with the production profile of aflatoxin G1 biosynthesis. A low ratio, produced over 30 degrees Celsius, is related to aflatoxin B1 biosynthesis. AflJ may act in aflR transport to or from the nucleus, thus controlling the availability of aflR for transcriptional activation of aflatoxin biosynthesis cluster genes. AflJ may also assist in directing endosomes to the cytoplasmic membrane for aflatoxin export. The protein is Aflatoxin cluster transcriptional coactivator aflS of Aspergillus parasiticus (strain ATCC 56775 / NRRL 5862 / SRRC 143 / SU-1).